Reading from the N-terminus, the 158-residue chain is Small ribosomal subunit protein uS7 (158 aa).

The protein belongs to the universal ribosomal protein uS7 family. Part of the 30S ribosomal subunit. Contacts proteins S9 and S11.

Functionally, one of the primary rRNA binding proteins, it binds directly to 16S rRNA where it nucleates assembly of the head domain of the 30S subunit. Is located at the subunit interface close to the decoding center, probably blocks exit of the E-site tRNA. This is Small ribosomal subunit protein uS7 from Gluconobacter oxydans (strain 621H) (Gluconobacter suboxydans).